We begin with the raw amino-acid sequence, 151 residues long: Ribosome-binding factor A (151 aa).

The disordered stretch occupies residues 116–151 (DAEVARAAANARPAGDPDPYREPRPADDDDEDDEDE). A compositionally biased stretch (low complexity) spans 120–129 (ARAAANARPA). Residues 142 to 151 (DDDDEDDEDE) are compositionally biased toward acidic residues.

The protein belongs to the RbfA family. In terms of assembly, monomer. Binds 30S ribosomal subunits, but not 50S ribosomal subunits or 70S ribosomes.

Its subcellular location is the cytoplasm. One of several proteins that assist in the late maturation steps of the functional core of the 30S ribosomal subunit. Associates with free 30S ribosomal subunits (but not with 30S subunits that are part of 70S ribosomes or polysomes). Required for efficient processing of 16S rRNA. May interact with the 5'-terminal helix region of 16S rRNA. The polypeptide is Ribosome-binding factor A (Thermobifida fusca (strain YX)).